The primary structure comprises 305 residues: Imidazoleglycerol-phosphate dehydratase (305 aa).

This sequence belongs to the imidazoleglycerol-phosphate dehydratase family.

Its subcellular location is the cytoplasm. It carries out the reaction D-erythro-1-(imidazol-4-yl)glycerol 3-phosphate = 3-(imidazol-4-yl)-2-oxopropyl phosphate + H2O. Its pathway is amino-acid biosynthesis; L-histidine biosynthesis; L-histidine from 5-phospho-alpha-D-ribose 1-diphosphate: step 6/9. The sequence is that of Imidazoleglycerol-phosphate dehydratase from Neisseria meningitidis serogroup C (strain 053442).